The chain runs to 249 residues: Tryptophan synthase alpha chain (249 aa).

Catalysis depends on proton acceptor residues Glu43 and Asp54.

This sequence belongs to the TrpA family. In terms of assembly, tetramer of two alpha and two beta chains.

It carries out the reaction (1S,2R)-1-C-(indol-3-yl)glycerol 3-phosphate + L-serine = D-glyceraldehyde 3-phosphate + L-tryptophan + H2O. The protein operates within amino-acid biosynthesis; L-tryptophan biosynthesis; L-tryptophan from chorismate: step 5/5. In terms of biological role, the alpha subunit is responsible for the aldol cleavage of indoleglycerol phosphate to indole and glyceraldehyde 3-phosphate. In Campylobacter jejuni subsp. doylei (strain ATCC BAA-1458 / RM4099 / 269.97), this protein is Tryptophan synthase alpha chain.